A 412-amino-acid polypeptide reads, in one-letter code: Alpha-2,8-sialyltransferase 8E (412 aa).

Topologically, residues 1–16 are cytoplasmic; the sequence is MRYADPSANRDLLGNR. Residues 17-37 form a helical; Signal-anchor for type II membrane protein membrane-spanning segment; it reads TLLFIFICAFALVTLLQQILY. At 38–412 the chain is on the lumenal side; it reads SKSYIKRGFQ…RVHTGTCNCC (375 aa). 4 N-linked (GlcNAc...) asparagine glycosylation sites follow: Asn58, Asn64, Asn73, and Asn92. Cystine bridges form between Cys200-Cys349 and Cys214-Cys409. Substrate contacts are provided by residues Asn228 and 250–252; that span reads NPS. A glycan (N-linked (GlcNAc...) asparagine) is linked at Asn277. 336–338 contributes to the substrate binding site; that stretch reads STG. The Proton donor/acceptor role is filled by His384.

The protein belongs to the glycosyltransferase 29 family. As to expression, highly expressed in brain. Expressed at low levels in other tissues, including liver, testis, lung, placenta and spleen.

It is found in the golgi apparatus membrane. The enzyme catalyses a ganglioside GT1b (d18:1(4E)) + CMP-N-acetyl-beta-neuraminate = a ganglioside GQ1b (d18:1(4E)) + CMP + H(+). It carries out the reaction a ganglioside GD3 (d18:1(4E)) + CMP-N-acetyl-beta-neuraminate = a ganglioside GT3 (d18:1(4E)) + CMP + H(+). The catalysed reaction is a ganglioside GD1a (d18:1(4E)) + CMP-N-acetyl-beta-neuraminate = a ganglioside GT1a (d18:1(4E)) + CMP + H(+). It catalyses the reaction a ganglioside GM1b (d18:1(4E)) + CMP-N-acetyl-beta-neuraminate = a ganglioside GD1c (d18:1(4E)) + CMP + H(+). The enzyme catalyses a ganglioside GQ1c (d18:1(4E)) + CMP-N-acetyl-beta-neuraminate = a ganglioside GP1c (d18:1(4E)) + CMP + H(+). The protein operates within protein modification; protein glycosylation. Its function is as follows. Involved in the synthesis of gangliosides GD1c, GT1a, GQ1b, GP1c and GT3 from GD1a, GT1b, GM1b and GD3 respectively. This is Alpha-2,8-sialyltransferase 8E from Mus musculus (Mouse).